Reading from the N-terminus, the 214-residue chain is Large ribosomal subunit protein uL3 (214 aa).

Belongs to the universal ribosomal protein uL3 family. Part of the 50S ribosomal subunit. Forms a cluster with proteins L14 and L19.

Its function is as follows. One of the primary rRNA binding proteins, it binds directly near the 3'-end of the 23S rRNA, where it nucleates assembly of the 50S subunit. The polypeptide is Large ribosomal subunit protein uL3 (Streptomyces coelicolor (strain ATCC BAA-471 / A3(2) / M145)).